The primary structure comprises 322 residues: Tyrosine recombinase XerC (322 aa).

A disordered region spans residues 1–25 (MPEAAPPVADARGSSPTATTGPGAD). Residues 16–25 (PTATTGPGAD) are compositionally biased toward low complexity. Positions 25–111 (DATLSAVEPF…ACRSYYAWLL (87 aa)) constitute a Core-binding (CB) domain. The Tyr recombinase domain maps to 132–309 (KLPQVLDADE…DFQHLAKVYD (178 aa)). Active-site residues include R171, K195, H261, R264, and H287. The active-site O-(3'-phospho-DNA)-tyrosine intermediate is Y296.

Belongs to the 'phage' integrase family. XerC subfamily. In terms of assembly, forms a cyclic heterotetrameric complex composed of two molecules of XerC and two molecules of XerD.

The protein resides in the cytoplasm. Site-specific tyrosine recombinase, which acts by catalyzing the cutting and rejoining of the recombining DNA molecules. The XerC-XerD complex is essential to convert dimers of the bacterial chromosome into monomers to permit their segregation at cell division. It also contributes to the segregational stability of plasmids. This Xanthomonas campestris pv. campestris (strain 8004) protein is Tyrosine recombinase XerC.